Consider the following 92-residue polypeptide: Small ribosomal subunit protein uS19 (92 aa).

Belongs to the universal ribosomal protein uS19 family.

Protein S19 forms a complex with S13 that binds strongly to the 16S ribosomal RNA. In Bacillus pumilus (strain SAFR-032), this protein is Small ribosomal subunit protein uS19.